The sequence spans 251 residues: CDP-diacylglycerol pyrophosphatase (251 aa).

Residues 5-25 traverse the membrane as a helical segment; that stretch reads GYFLLAVIVIVAAAGVGYWKF.

This sequence belongs to the Cdh family.

Its subcellular location is the cell inner membrane. The catalysed reaction is a CDP-1,2-diacyl-sn-glycerol + H2O = a 1,2-diacyl-sn-glycero-3-phosphate + CMP + 2 H(+). The protein operates within phospholipid metabolism; CDP-diacylglycerol degradation; phosphatidate from CDP-diacylglycerol: step 1/1. This chain is CDP-diacylglycerol pyrophosphatase, found in Salmonella enteritidis PT4 (strain P125109).